A 143-amino-acid polypeptide reads, in one-letter code: MKIIATNKNAKRNYEILKTFEAGIKLEGWEVKSARASSVELKNAYCSIYKDEVFLKESYFKKYMLLKVEETKNRKLLLHKKEILKIKQELQKNLSLIPTKIYFNSNSLIKVELALGRGLKKYDKREKLKKEEVEKKLKKILKF.

Belongs to the SmpB family.

Its subcellular location is the cytoplasm. In terms of biological role, required for rescue of stalled ribosomes mediated by trans-translation. Binds to transfer-messenger RNA (tmRNA), required for stable association of tmRNA with ribosomes. tmRNA and SmpB together mimic tRNA shape, replacing the anticodon stem-loop with SmpB. tmRNA is encoded by the ssrA gene; the 2 termini fold to resemble tRNA(Ala) and it encodes a 'tag peptide', a short internal open reading frame. During trans-translation Ala-aminoacylated tmRNA acts like a tRNA, entering the A-site of stalled ribosomes, displacing the stalled mRNA. The ribosome then switches to translate the ORF on the tmRNA; the nascent peptide is terminated with the 'tag peptide' encoded by the tmRNA and targeted for degradation. The ribosome is freed to recommence translation, which seems to be the essential function of trans-translation. The chain is SsrA-binding protein from Mycoplasmopsis synoviae (strain 53) (Mycoplasma synoviae).